Reading from the N-terminus, the 90-residue chain is MNGQGASADPQLQQFIEIESQKQRFQQLVHHMTEVCWDKCMDKPGPKLDSRAEMCFVNCVERFIDTSQFILNRLEQTQRSKGSFSETMTD.

Positions cysteine 36–cysteine 59 match the Twin CX3C motif motif. Intrachain disulfides connect cysteine 36/cysteine 59 and cysteine 40/cysteine 55.

It belongs to the small Tim family. In terms of assembly, heterohexamer; composed of 3 copies of TIMM8A and 3 copies of TIMM13, named soluble 70 kDa complex. Associates with the TIM22 complex, whose core is composed of TIMM22.

The protein resides in the mitochondrion inner membrane. In terms of biological role, mitochondrial intermembrane chaperone that participates in the import and insertion of some multi-pass transmembrane proteins into the mitochondrial inner membrane. Also required for the transfer of beta-barrel precursors from the TOM complex to the sorting and assembly machinery (SAM complex) of the outer membrane. Acts as a chaperone-like protein that protects the hydrophobic precursors from aggregation and guide them through the mitochondrial intermembrane space. The TIMM8-TIMM13 complex mediates the import of some proteins while the predominant TIMM9-TIMM10 70 kDa complex mediates the import of much more proteins. The protein is Mitochondrial import inner membrane translocase subunit Tim8 A (timm8a) of Takifugu rubripes (Japanese pufferfish).